Consider the following 300-residue polypeptide: E3 ubiquitin-protein ligase RNF212B (300 aa).

The RING-type zinc-finger motif lies at cysteine 6–glycine 40. Residues leucine 88–asparagine 124 are a coiled coil. Disordered stretches follow at residues tyrosine 141–valine 251 and proline 280–arginine 300. A compositionally biased stretch (polar residues) spans threonine 155–histidine 169. Positions serine 170–valine 183 are enriched in low complexity. Over residues glycine 191–leucine 200 the composition is skewed to gly residues. Residues asparagine 211–glycine 234 show a composition bias toward polar residues.

Homodimer. Autoubiquitinated.

The protein localises to the chromosome. It catalyses the reaction S-ubiquitinyl-[E2 ubiquitin-conjugating enzyme]-L-cysteine + [acceptor protein]-L-lysine = [E2 ubiquitin-conjugating enzyme]-L-cysteine + N(6)-ubiquitinyl-[acceptor protein]-L-lysine.. Its pathway is protein modification; protein ubiquitination. Ubiquitin E3 ligase that acts as a crucial factor for crossing-over (CO) formation during meiosis. Essential for normal prophase I progression and for ensuring appropriate CO designation in meiosis. Recruits key components of the cross-over machinery either directly ou indirectly, leading to the activation of the MutL-gamma complex. The function of RNF212B in CO designation is dependent on its catalytic activity. The sequence is that of E3 ubiquitin-protein ligase RNF212B (RNF212B) from Pongo abelii (Sumatran orangutan).